The sequence spans 395 residues: Guanine nucleotide-binding protein subunit beta-5b (395 aa).

7 WD repeats span residues 103–142 (GHGN…KEHA), 145–184 (MPCT…NENL), 193–234 (MHTN…QSFH), 235–276 (GHSA…NVQS), 279–318 (THDS…EVAI), 320–362 (SKDS…RVAI), and 365–395 (GHEN…RIWA).

It belongs to the WD repeat G protein beta family. In terms of assembly, may interact with RGS9; this interaction stabilizes both proteins and increases RGS9 GTPase-activating protein (GAP) activity, hence accelerating the deactivation of D(2) dopamine receptor-mediated signaling.

It is found in the membrane. Enhances GTPase-activating protein (GAP) activity of regulator of G protein signaling (RGS) proteins, such as RGS7 and RGS9, hence involved in the termination of the signaling initiated by the G protein coupled receptors (GPCRs) by accelerating the GTP hydrolysis on the G-alpha subunits, thereby promoting their inactivation. Increases RGS7 GTPase-activating protein (GAP) activity, thereby regulating mood and cognition. Increases RGS9 GTPase-activating protein (GAP) activity, hence contributes to the deactivation of G protein signaling initiated by D(2) dopamine receptors. Along with gnb5a, plays an important role in neuronal signaling, including in the parasympathetic, but not sympathetic, control of heart rate. This chain is Guanine nucleotide-binding protein subunit beta-5b, found in Danio rerio (Zebrafish).